The chain runs to 446 residues: Histidine--tRNA ligase (446 aa).

The protein belongs to the class-II aminoacyl-tRNA synthetase family. Homodimer.

Its subcellular location is the cytoplasm. It catalyses the reaction tRNA(His) + L-histidine + ATP = L-histidyl-tRNA(His) + AMP + diphosphate + H(+). In Burkholderia cenocepacia (strain ATCC BAA-245 / DSM 16553 / LMG 16656 / NCTC 13227 / J2315 / CF5610) (Burkholderia cepacia (strain J2315)), this protein is Histidine--tRNA ligase.